A 186-amino-acid polypeptide reads, in one-letter code: MLNNLEKQTREIVIDVVERSAIQPGNLFVLGLSSSEILGSRIGKQSSLEVGQIVVEVVLDELNKRGVHLAVQGCEHVNRALVVERHVAESKQLEIVNVVPNLHAGGSAQMAAFQLMSDPVEVEEVIAHAGLDIGDTAIGMHIKRVQIPLIPCQRELGGAHVTALASRPKLIGGARADYNMDIIRKS.

It belongs to the UPF0340 family.

The chain is UPF0340 protein M6_Spy1622 from Streptococcus pyogenes serotype M6 (strain ATCC BAA-946 / MGAS10394).